The primary structure comprises 382 residues: MQMIKKMVLSETFPGILLIFFTFLALLCKNSSLSVIYTDFFHANFTVGFDHFQISKSLDLWINDGLIAIFFLCIGLELKYEILRGQLKNIRAVSLPIFGALGGMITPALIFAAINYSHDFAMKGWAIPTATDIAFAVGILMLLGNKIPTSLKLFLLSLAIFDDLGAIVIIALFYTDQLSALAIIICLFCIFALLLLNYYHITHLSLYVLVGVVLWIAMLKSGVHATLAGVIISLFIPLDTKNKKPYLHEVLKDLNPWVVYFILPLFAFANAGIDIRDMHLGSVFSPVSLGIILGLFLGKQLGVFTFCFIAIKLKLAKLPENIKYGKFYGICILTGIGFTMSLFIDGLAYKNSDIFEHADKLAILIASFLSAIVGFIYLKIVK.

A run of 11 helical transmembrane segments spans residues 7 to 27 (MVLS…LALL), 58 to 78 (LDLW…GLEL), 94 to 114 (SLPI…FAAI), 124 to 144 (GWAI…MLLG), 153 to 173 (LFLL…IALF), 178 to 198 (LSAL…LLNY), 199 to 219 (YHIT…IAML), 255 to 275 (NPWV…GIDI), 291 to 311 (IILG…FIAI), 327 to 347 (FYGI…IDGL), and 361 to 381 (LAIL…LKIV).

It belongs to the NhaA Na(+)/H(+) (TC 2.A.33) antiporter family.

It localises to the cell inner membrane. It catalyses the reaction Na(+)(in) + 2 H(+)(out) = Na(+)(out) + 2 H(+)(in). Na(+)/H(+) antiporter that extrudes sodium in exchange for external protons. This Campylobacter jejuni subsp. jejuni serotype O:6 (strain 81116 / NCTC 11828) protein is Na(+)/H(+) antiporter NhaA 2.